Reading from the N-terminus, the 241-residue chain is Acyl-protein thioesterase 1 (241 aa).

Catalysis depends on charge relay system residues serine 122, aspartate 178, and histidine 211.

It belongs to the AB hydrolase superfamily. AB hydrolase 2 family.

The protein localises to the cytoplasm. It is found in the nucleus. It catalyses the reaction S-hexadecanoyl-L-cysteinyl-[protein] + H2O = L-cysteinyl-[protein] + hexadecanoate + H(+). Hydrolyzes fatty acids from S-acylated cysteine residues in proteins with a strong preference for palmitoylated G-alpha proteins over other acyl substrates. Mediates the deacylation of G-alpha proteins such as GPA1 in vivo, but has weak or no activity toward palmitoylated Ras proteins. Has weak lysophospholipase activity in vitro; however such activity may not exist in vivo. This Aspergillus fumigatus (strain ATCC MYA-4609 / CBS 101355 / FGSC A1100 / Af293) (Neosartorya fumigata) protein is Acyl-protein thioesterase 1.